The primary structure comprises 83 residues: MRLFLSLPVLVVVLSMVLEGPAPAQGAPEVSNPFDGLEELGKTLEDNTREFINRITQSELPAKMWDWFSETFRKVKEKLKIDS.

An N-terminal signal peptide occupies residues M1 to G26.

Belongs to the apolipoprotein C1 family.

It is found in the secreted. The protein is Apolipoprotein C-I, acidic form (APOC1A) of Pan troglodytes (Chimpanzee).